A 33-amino-acid chain; its full sequence is Cecropin-C (33 aa).

K21 carries the post-translational modification 5-hydroxylysine.

Monomer. In terms of tissue distribution, hemolymph.

The protein localises to the secreted. In terms of biological role, cecropins have lytic and antibacterial activity against several Gram-positive and Gram-negative bacteria. Also has activity against fungi. The protein is Cecropin-C of Heliothis virescens (Tobacco budworm moth).